The chain runs to 388 residues: Succinate--CoA ligase [ADP-forming] subunit beta (388 aa).

Residues 9–244 enclose the ATP-grasp domain; sequence KQLFARYGLP…QSQEDPREAQ (236 aa). ATP contacts are provided by residues Lys46, 53–55, Glu99, Thr102, and Glu107; that span reads GRG. Asn199 and Asp213 together coordinate Mg(2+). Substrate contacts are provided by residues Asn264 and 321-323; that span reads GIV.

The protein belongs to the succinate/malate CoA ligase beta subunit family. In terms of assembly, heterotetramer of two alpha and two beta subunits. The cofactor is Mg(2+).

It catalyses the reaction succinate + ATP + CoA = succinyl-CoA + ADP + phosphate. The catalysed reaction is GTP + succinate + CoA = succinyl-CoA + GDP + phosphate. It functions in the pathway carbohydrate metabolism; tricarboxylic acid cycle; succinate from succinyl-CoA (ligase route): step 1/1. Its function is as follows. Succinyl-CoA synthetase functions in the citric acid cycle (TCA), coupling the hydrolysis of succinyl-CoA to the synthesis of either ATP or GTP and thus represents the only step of substrate-level phosphorylation in the TCA. The beta subunit provides nucleotide specificity of the enzyme and binds the substrate succinate, while the binding sites for coenzyme A and phosphate are found in the alpha subunit. This Salmonella choleraesuis (strain SC-B67) protein is Succinate--CoA ligase [ADP-forming] subunit beta.